The sequence spans 638 residues: Threonine--tRNA ligase 2 (638 aa).

Residues 1-64 (MSKHVHIQLP…EEDAELSIVT (64 aa)) enclose the TGS domain. Positions 245 to 535 (DHRKLGKQLG…LIEHYGGAFP (291 aa)) are catalytic. The Zn(2+) site is built by Cys-336, His-387, and His-512.

Belongs to the class-II aminoacyl-tRNA synthetase family. As to quaternary structure, homodimer. Zn(2+) is required as a cofactor.

Its subcellular location is the cytoplasm. It catalyses the reaction tRNA(Thr) + L-threonine + ATP = L-threonyl-tRNA(Thr) + AMP + diphosphate + H(+). In terms of biological role, catalyzes the attachment of threonine to tRNA(Thr) in a two-step reaction: L-threonine is first activated by ATP to form Thr-AMP and then transferred to the acceptor end of tRNA(Thr). Also edits incorrectly charged L-seryl-tRNA(Thr). This Bacillus subtilis (strain 168) protein is Threonine--tRNA ligase 2 (thrZ).